The following is a 319-amino-acid chain: ATP-dependent 6-phosphofructokinase (319 aa).

G11 provides a ligand contact to ATP. ADP is bound at residue 21 to 25; it reads RAVVR. ATP contacts are provided by residues 72–73 and 102–105; these read RY and GDGS. Mg(2+) is bound at residue D103. 125-127 contributes to the substrate binding site; that stretch reads TID. Residue D127 is the Proton acceptor of the active site. ADP is bound at residue R154. Substrate-binding positions include R162 and 169–171; that span reads MGR. ADP is bound by residues 185–187, R211, and 213–215; these read GAE and KKH. Substrate is bound by residues E222, R243, and 249-252; that span reads HVQR.

Belongs to the phosphofructokinase type A (PFKA) family. ATP-dependent PFK group I subfamily. Prokaryotic clade 'B1' sub-subfamily. In terms of assembly, homotetramer. Requires Mg(2+) as cofactor.

Its subcellular location is the cytoplasm. The enzyme catalyses beta-D-fructose 6-phosphate + ATP = beta-D-fructose 1,6-bisphosphate + ADP + H(+). The protein operates within carbohydrate degradation; glycolysis; D-glyceraldehyde 3-phosphate and glycerone phosphate from D-glucose: step 3/4. Allosterically activated by ADP and other diphosphonucleosides, and allosterically inhibited by phosphoenolpyruvate. In terms of biological role, catalyzes the phosphorylation of D-fructose 6-phosphate to fructose 1,6-bisphosphate by ATP, the first committing step of glycolysis. This Listeria innocua serovar 6a (strain ATCC BAA-680 / CLIP 11262) protein is ATP-dependent 6-phosphofructokinase.